A 105-amino-acid chain; its full sequence is Small ribosomal subunit protein uS10 (105 aa).

Belongs to the universal ribosomal protein uS10 family. As to quaternary structure, part of the 30S ribosomal subunit.

In terms of biological role, involved in the binding of tRNA to the ribosomes. This chain is Small ribosomal subunit protein uS10, found in Phytoplasma australiense.